A 415-amino-acid chain; its full sequence is Gamma-glutamyl phosphate reductase (415 aa).

It belongs to the gamma-glutamyl phosphate reductase family.

It is found in the cytoplasm. The catalysed reaction is L-glutamate 5-semialdehyde + phosphate + NADP(+) = L-glutamyl 5-phosphate + NADPH + H(+). Its pathway is amino-acid biosynthesis; L-proline biosynthesis; L-glutamate 5-semialdehyde from L-glutamate: step 2/2. Its function is as follows. Catalyzes the NADPH-dependent reduction of L-glutamate 5-phosphate into L-glutamate 5-semialdehyde and phosphate. The product spontaneously undergoes cyclization to form 1-pyrroline-5-carboxylate. The protein is Gamma-glutamyl phosphate reductase of Desulforamulus reducens (strain ATCC BAA-1160 / DSM 100696 / MI-1) (Desulfotomaculum reducens).